We begin with the raw amino-acid sequence, 265 residues long: uncharacterized protein (265 aa).

Position 223 is a phosphoserine (Ser223).

This is an uncharacterized protein from Saccharomyces cerevisiae (strain ATCC 204508 / S288c) (Baker's yeast).